The following is a 306-amino-acid chain: Manganese transport system membrane protein MntB (306 aa).

Residues 1 to 25 (MNQLVVAFPFWHWLVEPLQYEFLIR) are Periplasmic-facing. The helical transmembrane segment at 26–46 (AIWVSAFVGLVCAVLSCYITL) threads the bilayer. The Cytoplasmic portion of the chain corresponds to 47–48 (KG). A helical membrane pass occupies residues 49–69 (WSLMGDAISHAVVPGVVLAYA). Residues 70–71 (LN) lie on the Periplasmic side of the membrane. The chain crosses the membrane as a helical span at residues 72–92 (IPFAIGAFTFGFGATVAIGYV). The Cytoplasmic segment spans residues 93–101 (KSKTRLKED). The chain crosses the membrane as a helical span at residues 102-122 (AVIGIVFTGFFALGLVLVTKI). Residues 123–141 (PSNVDLFHILFGNVLGISQ) are Periplasmic-facing. The helical transmembrane segment at 142–162 (QDIIQTLIAGSITLIVILLRR) threads the bilayer. At 163–179 (KDLLLFCFDPNHAKAIG) the chain is on the cytoplasmic side. Residues 180–200 (LRTQVMYYTLLSVLALTIVAA) form a helical membrane-spanning segment. The Periplasmic segment spans residues 201 to 202 (LQ). A helical membrane pass occupies residues 203–223 (TAGIILVISMLVTPGSIGYLL). Residues 224 to 228 (SDRFD) lie on the Cytoplasmic side of the membrane. Residues 229–249 (HMLWYSVVSSVLSCVLGTYLS) form a helical membrane-spanning segment. Residues 250 to 255 (YHFDVS) are Periplasmic-facing. Residues 256–276 (TGGMIVVILTTLFVIAMIGAP) form a helical membrane-spanning segment. The Cytoplasmic segment spans residues 277-306 (KYGILAQEWRKRSGPNPEDDENQTVVVDQV).

The protein belongs to the ABC-3 integral membrane protein family.

It is found in the cell membrane. Part of an ATP-driven transport system for manganese. This chain is Manganese transport system membrane protein MntB (mntB), found in Synechocystis sp. (strain ATCC 27184 / PCC 6803 / Kazusa).